The primary structure comprises 367 residues: Voltage-gated potassium channel subunit beta-2 (367 aa).

The NADP(+) site is built by T56, W57, Q63, and D85. The active-site Proton donor/acceptor is Y90. NADP(+) is bound by residues N158, S188, R189, Q214, W243, S244, P245, L246, A247, C248, K254, Y262, R264, G323, S325, Q329, E332, and N333.

It belongs to the shaker potassium channel beta subunit family. As to quaternary structure, forms heteromultimeric complex with alpha subunits.

It localises to the cytoplasm. The protein localises to the membrane. The protein resides in the cell membrane. Its subcellular location is the cell projection. It is found in the axon. It localises to the synapse. The protein localises to the synaptosome. The protein resides in the cytoskeleton. Its function is as follows. Regulatory subunit of the voltage-gated potassium (Kv) Shaker channels composed of pore-forming and potassium-conducting alpha subunits and of regulatory beta subunits. The beta-2/KCNAB2 cytoplasmic subunit may promote potassium channel closure via a mechanism that does not involve physical obstruction of the channel pore. Enhances current amplitude of Kv1.1/KCNA1 and Kv2.2/KCNA2 channels. May display nicotinamide adenine dinucleotide phosphate (NADPH)-dependent aldoketoreductase activity by catalyzing the NADPH-dependent reduction of a wide range of aldehyde and ketone substrates. The binding of oxidized and reduced nucleotide may alter Kv channel gating and contribute to dynamic fine tuning of cell excitability. The protein is Voltage-gated potassium channel subunit beta-2 (kcnab2) of Xenopus laevis (African clawed frog).